Here is a 131-residue protein sequence, read N- to C-terminus: MRKTALLNSDLSSVISKMGHTDMIAIGDCGLPIPAESERIDLALIKGIPTFMQTLKTTLLELQIEEVILAKETEAVSPDLYEEIKEVIGDVKITFITHEELKTTLKSCKAVVRTGEQTPYANIILKSGVVF.

Catalysis depends on His-20, which acts as the Proton donor. Substrate is bound by residues Asp-28, His-98, and 120–122; that span reads YAN.

Belongs to the RbsD / FucU family. RbsD subfamily. As to quaternary structure, homodecamer.

It localises to the cytoplasm. The enzyme catalyses beta-D-ribopyranose = beta-D-ribofuranose. The protein operates within carbohydrate metabolism; D-ribose degradation; D-ribose 5-phosphate from beta-D-ribopyranose: step 1/2. Functionally, catalyzes the interconversion of beta-pyran and beta-furan forms of D-ribose. This is D-ribose pyranase from Clostridium botulinum (strain Eklund 17B / Type B).